Here is a 904-residue protein sequence, read N- to C-terminus: Polycystin-2 (904 aa).

A disordered region spans residues 1 to 102; that stretch reads MSSSRVRPQA…SSSGGVPGNF (102 aa). Topologically, residues 1-155 are cytoplasmic; that stretch reads MSSSRVRPQA…NSNREMYLKT (155 aa). Over residues 8-20 the composition is skewed to low complexity; sequence PQAPQSPAASASA. Residues 26-38 show a composition bias toward basic and acidic residues; that stretch reads EGIEMEKMHHEEV. Residues 86 to 96 show a composition bias toward low complexity; it reads SVSTTSSSSSG. The chain crosses the membrane as a helical span at residues 156-177; the sequence is VLREMITYILFLLTLCIITYGM. Residues 178–404 lie on the Extracellular side of the membrane; sequence VSTNMYYYTK…TVRLLRYVSS (227 aa). Residues Asn-235, Asn-241, and Asn-264 are each glycosylated (N-linked (GlcNAc...) asparagine). Residues Cys-267 and Cys-280 are joined by a disulfide bond. Residue Asn-298 is glycosylated (N-linked (GlcNAc...) asparagine). A helical membrane pass occupies residues 405 to 425; the sequence is WDYFVGMCEVSFCLFVLYYLV. The Cytoplasmic segment spans residues 426 to 441; that stretch reads EEALEIRLHRLRYFKS. A helical transmembrane segment spans residues 442–462; it reads LWNCLDVLIVALSVPAIIMNI. At 463–489 the chain is on the extracellular side; sequence CRTSAVSHRLHFLLENHSTYPNFEPLA. An N-linked (GlcNAc...) asparagine glycan is attached at Asn-478. Residues 490–510 form a helical membrane-spanning segment; that stretch reads RLQVHFNNLAAIIVFLSWVKL. Residues 511–534 are Cytoplasmic-facing; it reads FKFINFNKTMNQLSTTMSRCAKDL. The helical transmembrane segment at 535–556 threads the bilayer; the sequence is MGFAIMFFIVFLAYAQLAYLVF. Over 557-568 the chain is Extracellular; sequence GTQVNDFSTFQA. Residues 569–583 constitute an intramembrane region (pore-forming); sequence CIFTQFRIILGDFDF. Residue Leu-578 participates in Ca(2+) binding. The Selectivity filter motif lies at 578 to 580; the sequence is LGD. At 584–591 the chain is on the extracellular side; it reads SEIEEADS. Residues 592–612 form a helical membrane-spanning segment; that stretch reads VLGPIYFTTFVFFIFMILLNM. The Cytoplasmic segment spans residues 613–904; sequence FLAIINDTYS…DAAASGPAHL (292 aa). The EF-hand 1 domain maps to 687 to 722; the sequence is HSDAEIEAIFAKYDLDGDQELTEHEHQQMRDDLEKE. Ca(2+) contacts are provided by Asp-700, Asp-702, Asp-704, Glu-706, and Glu-711. Residues 708-732 show a composition bias toward basic and acidic residues; it reads TEHEHQQMRDDLEKEREDLDLEHSS. 2 disordered regions span residues 708–770 and 854–904; these read TEHE…SSGG and ESDD…PAHL. A linker region spans residues 740–759; that stretch reads RSFSRSQDDSEEDDDEDSGH. Positions 768–786 constitute an EF-hand 2 domain; the sequence is SGGVSYEEFQVLVRRVDRM. The stretch at 770–809 forms a coiled coil; it reads GVSYEEFQVLVRRVDRMEHSIGSIVSKIDAVIVKLEAMER. A compositionally biased stretch (low complexity) spans 878–890; the sequence is LRPRSSRPPSSLS.

This sequence belongs to the polycystin family. As to quaternary structure, homotetramer. Component of the heterotetrameric polycystin channel complex with pkd1; the tetramer contains one pkd1 chain and three pkd2 chains. Interacts with pkd1l1. Post-translationally, phosphorylated. Phosphorylation is important for protein function; a mutant human construct that lacks the N-terminal phosphorylation sites cannot complement a zebrafish pkd2-deficient mutant. N-glycosylated. The four subunits in a tetramer probably differ in the extent of glycosylation; simultaneous glycosylation of all experimentally validated sites would probably create steric hindrance. In terms of processing, sumoylated by SUMO1; sumoylation regulates PKD2 membrane recycling. As to expression, detected along cilia and at the cilium basal body in Kupffer's vesicle at the 10 somite stage. Detected in heart at 48hpf. Detected in muscle and pronephric kidney at 48 hpf. Detected on trunk muscle sarcolemma and sarcomere, on ependymal cell cilia in brain, at the apical cell membrane in epithelial cells in the ear, at the lateral line organ and olfactory placode at 56 hpf. Detected in adult kidney (at protein level).

It is found in the basolateral cell membrane. The protein localises to the cell membrane. The protein resides in the sarcolemma. It localises to the cytoplasm. Its subcellular location is the myofibril. It is found in the sarcomere. The protein localises to the sarcoplasmic reticulum membrane. The protein resides in the apical cell membrane. It localises to the endoplasmic reticulum membrane. Its subcellular location is the cell projection. It is found in the cilium. The protein localises to the cytoskeleton. The protein resides in the cilium basal body. It localises to the cytoplasmic vesicle membrane. The enzyme catalyses K(+)(in) = K(+)(out). The catalysed reaction is Na(+)(in) = Na(+)(out). It catalyses the reaction Ca(2+)(in) = Ca(2+)(out). Channel activity is regulated by phosphorylation. Channel activity is regulated by intracellular Ca(2+). In terms of biological role, forms a nonselective cation channel. Can function as a homotetrameric ion channel or can form heteromer with PKD1. Displays distinct function depending on its subcellular localization and regulation by its binding partners. In the primary cilium functions as a cation channel, with a preference for monovalent cations over divalent cations that allows K(+), Na(+) and Ca(2+) influx, with low selectivity for Ca(2+). In the endoplasmic reticulum, likely functions as a K(+) channel to facilitate Ca(2+) release. Required for normal oscillation of Ca(2+) levels within cilia; these oscillations of the intraciliary Ca(2+) levels can trigger cytoplasmic Ca(2+) signaling cascades. Required for normal temporal variation of the intracellular Ca(2+) levels in the heart. Plays a role in fluid-flow mechanosensation. Required for normal specification of the body left-right axis during embryogenesis, most likely via its role in ciliary Ca(2+) oscillations in Kupffer's vesicle. The polypeptide is Polycystin-2 (Danio rerio (Zebrafish)).